Reading from the N-terminus, the 510-residue chain is Lysine--tRNA ligase (510 aa).

Glutamate 420 and glutamate 427 together coordinate Mg(2+).

Belongs to the class-II aminoacyl-tRNA synthetase family. As to quaternary structure, homodimer. The cofactor is Mg(2+).

Its subcellular location is the cytoplasm. It catalyses the reaction tRNA(Lys) + L-lysine + ATP = L-lysyl-tRNA(Lys) + AMP + diphosphate. In Clostridium novyi (strain NT), this protein is Lysine--tRNA ligase.